Here is a 118-residue protein sequence, read N- to C-terminus: Mediator of RNA polymerase II transcription subunit 11 (118 aa).

This sequence belongs to the Mediator complex subunit 11 family. As to quaternary structure, component of the Mediator complex.

It is found in the nucleus. Its function is as follows. Component of the Mediator complex, a coactivator involved in the regulated transcription of nearly all RNA polymerase II-dependent genes. Mediator functions as a bridge to convey information from gene-specific regulatory proteins to the basal RNA polymerase II transcription machinery. Mediator is recruited to promoters by direct interactions with regulatory proteins and serves as a scaffold for the assembly of a functional pre-initiation complex with RNA polymerase II and the general transcription factors. The protein is Mediator of RNA polymerase II transcription subunit 11 (med11) of Xenopus tropicalis (Western clawed frog).